We begin with the raw amino-acid sequence, 334 residues long: Serine/threonine-protein kinase SAPK3 (334 aa).

The Protein kinase domain occupies 5-261; that stretch reads YEALKELGAG…IPEIKKHTWF (257 aa). ATP is bound by residues 11–19 and lysine 34; that span reads LGAGNFGVA. Catalysis depends on aspartate 124, which acts as the Proton acceptor.

Belongs to the protein kinase superfamily. Ser/Thr protein kinase family. Autophosphorylated in presence of Ca(2+). In terms of tissue distribution, expressed in leaves and maturing seeds, but not in roots and stems of field-grown plants.

The protein localises to the cytoplasm. The protein resides in the nucleus. It catalyses the reaction L-seryl-[protein] + ATP = O-phospho-L-seryl-[protein] + ADP + H(+). The enzyme catalyses L-threonyl-[protein] + ATP = O-phospho-L-threonyl-[protein] + ADP + H(+). Its activity is regulated as follows. Activated by phosphorylation. Functionally, may play a role in signal transduction of hyperosmotic response. This is Serine/threonine-protein kinase SAPK3 (SAPK3) from Oryza sativa subsp. indica (Rice).